The following is a 426-amino-acid chain: Glucan endo-1,3-beta-glucosidase 11 (426 aa).

The signal sequence occupies residues 1–30 (MELTSFHRSSLLFLISLTLIILPTTTTSIG). Residue Asn112 is glycosylated (N-linked (GlcNAc...) asparagine). Glu121 acts as the Proton donor in catalysis. Asn126 carries an N-linked (GlcNAc...) asparagine glycan. Glu266 functions as the Nucleophile in the catalytic mechanism. Over residues 360–372 (GGGTGGGNSSSGG) the composition is skewed to gly residues. The segment at 360-389 (GGGTGGGNSSSGGGRDKSPVFPVSPVAPDS) is disordered. Asn367 is a glycosylation site (N-linked (GlcNAc...) asparagine). Ser398 carries GPI-anchor amidated serine lipidation. Residues 399–426 (ASPVTGKRKGKGAILSLVVSMLLARHLL) constitute a propeptide, removed in mature form.

This sequence belongs to the glycosyl hydrolase 17 family.

The protein localises to the secreted. It is found in the cell wall. It localises to the cell membrane. The catalysed reaction is Hydrolysis of (1-&gt;3)-beta-D-glucosidic linkages in (1-&gt;3)-beta-D-glucans.. This Arabidopsis thaliana (Mouse-ear cress) protein is Glucan endo-1,3-beta-glucosidase 11.